A 239-amino-acid chain; its full sequence is Fatty acid metabolism regulator protein (239 aa).

Residues 6-74 (QSPAGFAEEY…HGKPTKVNNF (69 aa)) form the HTH gntR-type domain. Positions 34–53 (ERELSELIGVTRTTLREVLQ) form a DNA-binding region, H-T-H motif.

In terms of assembly, homodimer.

It localises to the cytoplasm. Multifunctional regulator of fatty acid metabolism. The protein is Fatty acid metabolism regulator protein of Escherichia fergusonii (strain ATCC 35469 / DSM 13698 / CCUG 18766 / IAM 14443 / JCM 21226 / LMG 7866 / NBRC 102419 / NCTC 12128 / CDC 0568-73).